The sequence spans 287 residues: Telomere repeat-binding factor 5 (287 aa).

The HTH myb-type domain occupies 1 to 62; it reads MGNQKLKWTA…WRNLSVPPGT (62 aa). The segment at residues 28-58 is a DNA-binding region (H-T-H motif); it reads WKNILRDPEFADQLIHRSNIDLKDKWRNLSV. The tract at residues 58 to 107 is disordered; that stretch reads VPPGTQSLTNKARPAKVKEEGDTPAADANDAVTIPRPIPTIPPPPGRRTL. Residues 93 to 103 are compositionally biased toward pro residues; the sequence is RPIPTIPPPPG. In terms of domain architecture, H15 spans 119–193; it reads NAPRYDGVIF…SIQNFYKIPD (75 aa). A coiled-coil region spans residues 233 to 259; sequence AACKVVEAENKIDVAKLAAEEFEKMTK.

The protein belongs to the histone H1/H5 family. SMH subfamily.

The protein localises to the nucleus. Its subcellular location is the chromosome. Binds preferentially double-stranded telomeric repeats. This chain is Telomere repeat-binding factor 5, found in Arabidopsis thaliana (Mouse-ear cress).